The following is an 83-amino-acid chain: UPF0297 protein LEUM_0557 (83 aa).

It belongs to the UPF0297 family.

In Leuconostoc mesenteroides subsp. mesenteroides (strain ATCC 8293 / DSM 20343 / BCRC 11652 / CCM 1803 / JCM 6124 / NCDO 523 / NBRC 100496 / NCIMB 8023 / NCTC 12954 / NRRL B-1118 / 37Y), this protein is UPF0297 protein LEUM_0557.